A 120-amino-acid chain; its full sequence is NAD(P)H-quinone oxidoreductase subunit 3, chloroplastic (120 aa).

3 helical membrane passes run 11–31 (VVFFIVACLVPILALSGSKLI), 65–85 (FALIFVIFDVETLFLYPWAIV), and 89–109 (LGITAFLETLIFLSILIIGLV).

This sequence belongs to the complex I subunit 3 family. In terms of assembly, NDH is composed of at least 16 different subunits, 5 of which are encoded in the nucleus.

It localises to the plastid. It is found in the chloroplast thylakoid membrane. The catalysed reaction is a plastoquinone + NADH + (n+1) H(+)(in) = a plastoquinol + NAD(+) + n H(+)(out). It carries out the reaction a plastoquinone + NADPH + (n+1) H(+)(in) = a plastoquinol + NADP(+) + n H(+)(out). NDH shuttles electrons from NAD(P)H:plastoquinone, via FMN and iron-sulfur (Fe-S) centers, to quinones in the photosynthetic chain and possibly in a chloroplast respiratory chain. The immediate electron acceptor for the enzyme in this species is believed to be plastoquinone. Couples the redox reaction to proton translocation, and thus conserves the redox energy in a proton gradient. The polypeptide is NAD(P)H-quinone oxidoreductase subunit 3, chloroplastic (Mesostigma viride (Green alga)).